We begin with the raw amino-acid sequence, 71 residues long: Heat-stable enterotoxin II (71 aa).

Positions 1–23 (MKKNIAFLLASMFVFSIATNAYA) are cleaved as a signal peptide. 2 cysteine pairs are disulfide-bonded: Cys-33–Cys-71 and Cys-44–Cys-59.

Its subcellular location is the secreted. Functionally, toxin which activates the particulate form of guanylate cyclase and increases cyclic GMP levels within the host intestinal epithelial cells. In Escherichia coli, this protein is Heat-stable enterotoxin II (stiI).